Here is a 358-residue protein sequence, read N- to C-terminus: Aminomethyltransferase (358 aa).

The protein belongs to the GcvT family. As to quaternary structure, the glycine cleavage system is composed of four proteins: P, T, L and H.

The enzyme catalyses N(6)-[(R)-S(8)-aminomethyldihydrolipoyl]-L-lysyl-[protein] + (6S)-5,6,7,8-tetrahydrofolate = N(6)-[(R)-dihydrolipoyl]-L-lysyl-[protein] + (6R)-5,10-methylene-5,6,7,8-tetrahydrofolate + NH4(+). Its function is as follows. The glycine cleavage system catalyzes the degradation of glycine. The polypeptide is Aminomethyltransferase (Francisella tularensis subsp. holarctica (strain FTNF002-00 / FTA)).